Reading from the N-terminus, the 1248-residue chain is MPGLYCPTSWTPLPLTDSCVRAYAKGPCLSLRARLTYHNPQPQPVEGVFVYPLAEAEVVSGFEAEAAGRRVSFQLHSRRRSQAACCRALGPGLGTSTPRRCAQGHLVLNLAQARSTLVLPTGLVAAAGTMTVTLCSSRELPSRPDGVMHVALPTVFTPLAQPNLPGSPRSPGLCDDSPTSCFGVGSPEEERPTWEQPTATPDVFSGPARCPAPYTFSFEMLVTGPCLLAGLESPSHALRADALPHASSAATIRVTLAEGHQCDRALEILLHPSEPHQPHLMLETGSLSSAEYEAQVRARHDFQRLQQRDSGGERQVWFLQRRFHKDILLNPVLVLNFCPDLSSKPGHLNAATRELLFLLDGSGAGHKDAIVLAVKSLPAQTLVNLAIFGTLVQPLFPESRPCSDDTVQLICESIETLQTVNGPPDMLAVLDWALGQPQHRAYPRQMFLITAASPTAATTHQALEFMRWHRGAARCFSFALAPACRQLLHDLSVLSRGQAYFLRPGERLQPKLVQALRKALEPALSDISVDWFVPDAVEALLTPREIPALYPGDQLLGYCSLFRVDGFRSHALGGQEPGWQSLAGSVFPSPEEVLSATSPGTEPTHTTEPLGTGTVSAELSSPWAVGDSEQSMEALTDPVMDPGPNPSSDTAIWRRIFQSSYIREQYVLTHCSASPEPGPGSTCSSESPGSQGPGSPSGSRPLDPPSQQGCRSLAWVEPAGSRSCPLPVPPPSPFKVGAMSAEVLGRRQRAALAGRSLSSPSGRANPVPGRARHPSLDAIPDGLGPEPGQQLGQGLDDSGNLLSPAPLDWDMLMEPSFLFKPVPSSAESAPPAECLPPQAPRCHVVIRALCGEQPMCWEVGVGLEELWGPGDGSQPESLPMREAAWDQALHRLTAASVVQDNEQLALRGRAETRAEQGRVRRSWLRAIQTSKVSSAPSCFTCPVAVDATTREVLPGALQVWSSDPAELSGMSASQDQLAAAPLSTAVHSKGHQGGCSAGAWDLDLNDNSKSALGEPISPTGDHHGLPHQPPASSRLSLGRHRRLCSSNKGQTHENSNDGSNHDYLPLVRLQEAPGSFRLDEPFCAAVCIPQERLCRASPFAAHRASLSPTSASSPWAFLSPGIGQGDSATASCSQSPSSGSEGPGQVDSGRGSDTEASEGMERQDSSDLRGRTWATAVALAWLEHRCAAAFGEWELTASKADCWLRAQHLPDGLDLTALKAAARGLFLLLRHWDQNLQLHLLCYSPSNV.

One can recognise a VIT domain in the interval 1 to 138; that stretch reads MPGLYCPTSW…TMTVTLCSSR (138 aa). Residues 184 to 204 are disordered; it reads VGSPEEERPTWEQPTATPDVF. The VWFA domain maps to 354–527; the sequence is ELLFLLDGSG…KALEPALSDI (174 aa). Disordered regions lie at residues 590-650, 672-710, 751-789, 1008-1037, and 1126-1168; these read PEEV…SSDT, SASP…QQGC, ALAG…EPGQ, SKSA…RLSL, and DSAT…SSDL. Residues 595–619 show a composition bias toward polar residues; that stretch reads SATSPGTEPTHTTEPLGTGTVSAEL. 3 stretches are compositionally biased toward low complexity: residues 684–701, 751–764, and 780–789; these read SSES…GSRP, ALAG…SGRA, and PDGLGPEPGQ. A compositionally biased stretch (low complexity) spans 1127-1145; that stretch reads SATASCSQSPSSGSEGPGQ. Over residues 1159–1168 the composition is skewed to basic and acidic residues; it reads GMERQDSSDL.

The protein is von Willebrand factor A domain-containing protein 5B2 (Vwa5b2) of Mus musculus (Mouse).